The primary structure comprises 1444 residues: Probable chitinase LysM18 (1444 aa).

LysM domains are found at residues 256 to 302 (STVQ…HFCC) and 321 to 369 (TTYT…IICL). One can recognise a Chitin-binding type-1 domain in the interval 382–450 (NAECGPQVPG…TNGCISNCGT (69 aa)). Intrachain disulfides connect Cys385–Cys413, Cys407–Cys419, Cys412–Cys426, and Cys444–Cys448. The 371-residue stretch at 461–831 (YRKVGFYEGF…STSWTKFTSD (371 aa)) folds into the GH18 domain. Glu582 functions as the Proton donor in the catalytic mechanism. Chitin contacts are provided by Tyr583 and Trp808.

It belongs to the glycosyl hydrolase 18 family. Chitinase class V subfamily.

It catalyses the reaction Random endo-hydrolysis of N-acetyl-beta-D-glucosaminide (1-&gt;4)-beta-linkages in chitin and chitodextrins.. Probable chitinase involved in the degradation of chitin, a component of the cell walls of fungi and exoskeletal elements of some animals (including worms and arthropods). Might be involved in manipulation of host defenses for successful infection. This Penicillium expansum (Blue mold rot fungus) protein is Probable chitinase LysM18.